The chain runs to 653 residues: Protein fem-1 homolog A (653 aa).

ANK repeat units follow at residues 2–31, 40–70, 82–111, 115–145, 149–178, 182–211, and 214–243; these read DLHT…REEL, SGGT…SVEA, EGAP…SVNR, TNST…DLEV, HGHT…QVNR, KGNT…RMER, and YGMT…AGDE. The residue at position 108 (Ser-108) is a Phosphoserine. The disordered stretch occupies residues 242-274; it reads DEQAQPGLARVQPQGARSSPEEPPSGESYESCC. TPR repeat units lie at residues 282-316 and 374-407; these read VEAL…RHQG and SYYI…QQNN. ANK repeat units lie at residues 518–560 and 564–593; these read NGFT…DPDS and DNNT…HMDA.

It belongs to the fem-1 family. Component of a CRL2 E3 ubiquitin-protein ligase complex, also named ECS (Elongin BC-CUL2/5-SOCS-box protein) complex, composed of CUL2, Elongin BC (ELOB and ELOC), RBX1 and substrate-specific adapter FEM1A. Interacts with PTGER4. Interacts with NFKB1; the interaction is direct. Post-translationally, phosphorylated; highly phosphorylated in myoblasts and myotubes. Phosphorylation at Ser-108 promotes PGE2-EP4-mediated inhibition of inflammation. Dephosphorylated by protein phosphatase 2A (PP2A).

It is found in the mitochondrion. Its subcellular location is the cytoplasm. It participates in protein modification; protein ubiquitination. Substrate-recognition component of a Cul2-RING (CRL2) E3 ubiquitin-protein ligase complex of the DesCEND (destruction via C-end degrons) pathway, which recognizes a C-degron located at the extreme C terminus of target proteins, leading to their ubiquitination and degradation. The C-degron recognized by the DesCEND pathway is usually a motif of less than ten residues and can be present in full-length proteins, truncated proteins or proteolytically cleaved forms. The CRL2(FEM1A) complex specifically recognizes proteins with an arginine at the C-terminus: recognizes and binds proteins ending with -Lys/Arg-Xaa-Arg and -Lys/Arg-Xaa-Xaa-Arg C-degrons, such as SIL1 or OR51B2, leading to their ubiquitination and degradation. Involved in PGE2-EP4-mediated inhibition of inflammation of macrophages via interaction with NFKB1 and PTGER4. Promotes inflammation in brain microglia through MAP2K4/MKK4-mediated signaling. The sequence is that of Protein fem-1 homolog A from Bos taurus (Bovine).